A 312-amino-acid polypeptide reads, in one-letter code: MGLNKSASTFQLTGFPGMEKAHHWIFIPLLAAYISILLGNGTLLFLIRNDHNLHEPMYYFLAMLAATDLGVTLTTMPTVLGVLWLDHREIGHGACFSQAYFIHTLSVMESGVLLAMAYDCFITIRSPLRYTSILTNTQVMKIGVRVLTRAGLSIMPIVVRLHWFPYCRSHVLSHAFCLHQDVIKLACADITFNRLYPVVVLFAMVLLDFLIIFFSYILILKTVMGIGSGGERAKALNTCVSHICCILVFYVTVVCLTFIHRFGKHVPHVVHITMSYIHFLFPPFMNPFIYSIKTKQIQSGILRLFSLPHSRA.

The Extracellular segment spans residues 1–23 (MGLNKSASTFQLTGFPGMEKAHH). The N-linked (GlcNAc...) asparagine glycan is linked to Asn-4. A helical membrane pass occupies residues 24–44 (WIFIPLLAAYISILLGNGTLL). Residues 45–52 (FLIRNDHN) lie on the Cytoplasmic side of the membrane. Residues 53-73 (LHEPMYYFLAMLAATDLGVTL) traverse the membrane as a helical segment. The Extracellular segment spans residues 74–97 (TTMPTVLGVLWLDHREIGHGACFS). Cys-95 and Cys-187 form a disulfide bridge. The chain crosses the membrane as a helical span at residues 98–118 (QAYFIHTLSVMESGVLLAMAY). Topologically, residues 119 to 137 (DCFITIRSPLRYTSILTNT) are cytoplasmic. A helical transmembrane segment spans residues 138–158 (QVMKIGVRVLTRAGLSIMPIV). Topologically, residues 159–194 (VRLHWFPYCRSHVLSHAFCLHQDVIKLACADITFNR) are extracellular. Residues 195 to 215 (LYPVVVLFAMVLLDFLIIFFS) traverse the membrane as a helical segment. At 216-235 (YILILKTVMGIGSGGERAKA) the chain is on the cytoplasmic side. The chain crosses the membrane as a helical span at residues 236–256 (LNTCVSHICCILVFYVTVVCL). At 257-271 (TFIHRFGKHVPHVVH) the chain is on the extracellular side. Residues 272–292 (ITMSYIHFLFPPFMNPFIYSI) form a helical membrane-spanning segment. Residues 293–312 (KTKQIQSGILRLFSLPHSRA) are Cytoplasmic-facing.

This sequence belongs to the G-protein coupled receptor 1 family.

It is found in the cell membrane. In terms of biological role, odorant receptor. The chain is Olfactory receptor 51B6 (OR51B6) from Homo sapiens (Human).